The sequence spans 143 residues: Large ribosomal subunit protein uL15 (143 aa).

The segment at 1–58 (MQLNDLRSAPGARREKHRPGRGIGSGLGKTGGRGHKGQTSRSGGSIAPGFEGGQQPLH) is disordered. A compositionally biased stretch (gly residues) spans 21 to 31 (RGIGSGLGKTG).

Belongs to the universal ribosomal protein uL15 family. Part of the 50S ribosomal subunit.

In terms of biological role, binds to the 23S rRNA. The chain is Large ribosomal subunit protein uL15 from Ectopseudomonas mendocina (strain ymp) (Pseudomonas mendocina).